The chain runs to 104 residues: Large ribosomal subunit protein uL24 (104 aa).

Over residues Ile-85 to Arg-96 the composition is skewed to basic and acidic residues. Residues Ile-85–Lys-104 form a disordered region.

This sequence belongs to the universal ribosomal protein uL24 family. As to quaternary structure, part of the 50S ribosomal subunit.

Functionally, one of two assembly initiator proteins, it binds directly to the 5'-end of the 23S rRNA, where it nucleates assembly of the 50S subunit. One of the proteins that surrounds the polypeptide exit tunnel on the outside of the subunit. The sequence is that of Large ribosomal subunit protein uL24 from Anaeromyxobacter sp. (strain Fw109-5).